A 332-amino-acid chain; its full sequence is Abscisic acid-inducible protein kinase (332 aa).

ATP contacts are provided by residues 1–8 and Lys-23; that span reads GSGNFGVA. Residues 1-250 form the Protein kinase domain; the sequence is GSGNFGVAKL…IPEIKNHPWF (250 aa). The active-site Proton acceptor is the Asp-113.

It belongs to the protein kinase superfamily. Ser/Thr protein kinase family. In terms of processing, autophosphorylated.

It catalyses the reaction L-seryl-[protein] + ATP = O-phospho-L-seryl-[protein] + ADP + H(+). It carries out the reaction L-threonyl-[protein] + ATP = O-phospho-L-threonyl-[protein] + ADP + H(+). Functionally, involved in water-stress responses. The sequence is that of Abscisic acid-inducible protein kinase from Triticum aestivum (Wheat).